A 150-amino-acid polypeptide reads, in one-letter code: UPF0098 protein CPn_0877/CP_0992/CPj0877/CpB0906 (150 aa).

The protein belongs to the UPF0098 family.

This chain is UPF0098 protein CPn_0877/CP_0992/CPj0877/CpB0906, found in Chlamydia pneumoniae (Chlamydophila pneumoniae).